The sequence spans 321 residues: Phospho-N-acetylmuramoyl-pentapeptide-transferase (321 aa).

The next 10 helical transmembrane spans lie at 1–21 (MIYV…PILI), 49–69 (TMGG…AIIF), 77–97 (ILLL…DYII), 112–132 (FLAQ…FNMI), 140–160 (IPFT…IVFW), 176–196 (GLAT…SFML), 200–220 (AVGT…IYNV), 225–245 (VFMG…VSIM), 250–270 (ISLI…ILQV), and 300–320 (VVSV…WIGV).

Belongs to the glycosyltransferase 4 family. MraY subfamily. Mg(2+) is required as a cofactor.

The protein resides in the cell membrane. It catalyses the reaction UDP-N-acetyl-alpha-D-muramoyl-L-alanyl-gamma-D-glutamyl-L-lysyl-D-alanyl-D-alanine + di-trans,octa-cis-undecaprenyl phosphate = Mur2Ac(oyl-L-Ala-gamma-D-Glu-L-Lys-D-Ala-D-Ala)-di-trans,octa-cis-undecaprenyl diphosphate + UMP. Its pathway is cell wall biogenesis; peptidoglycan biosynthesis. In terms of biological role, catalyzes the initial step of the lipid cycle reactions in the biosynthesis of the cell wall peptidoglycan: transfers peptidoglycan precursor phospho-MurNAc-pentapeptide from UDP-MurNAc-pentapeptide onto the lipid carrier undecaprenyl phosphate, yielding undecaprenyl-pyrophosphoryl-MurNAc-pentapeptide, known as lipid I. This is Phospho-N-acetylmuramoyl-pentapeptide-transferase from Staphylococcus carnosus (strain TM300).